We begin with the raw amino-acid sequence, 681 residues long: Protein hook (681 aa).

Residues 6–123 (NEMYYSLLEW…RLLQLVLGCA (118 aa)) form the Calponin-homology (CH) domain. Coiled coils occupy residues 135-439 (EIMS…LKCG) and 482-584 (QTAL…KYRK).

This sequence belongs to the hook family. Homodimer. Interacts with microtubules via its N-terminus.

Its subcellular location is the cytoplasm. It is found in the cytoskeleton. The protein localises to the endosome. The protein resides in the synapse. Functionally, involved in endocytic trafficking by stabilizing organelles of the endocytic pathway. Probably acts as a cytoskeletal linker protein required to tether endosome vesicles to the cytoskeleton. Involved in modulation of endocytosis at stages required for down-regulation of membrane proteins that control synapse size. Not involved in synaptic vesicle recycling. Required in R7 cells for boss endocytosis into multivesicular bodies (MVBs). Has a role in regulating adult longevity. The chain is Protein hook from Drosophila ananassae (Fruit fly).